The primary structure comprises 438 residues: Transposon Ty2-GR1 Gag polyprotein (438 aa).

3 stretches are compositionally biased toward polar residues: residues 1–11 (MESQQLHQNPH), 19–39 (ASVTSKEVPSNQDPLAVSASN), and 49–60 (KVNSQQETTPGT). 3 disordered regions span residues 1–86 (MESQ…GQYQ), 360–403 (HSEY…ATSS), and 418–438 (VSSQYLSDDDELSLRPATERI). The tract at residues 295–397 (ENNINVSDRL…SSKPRAAKAH (103 aa)) is RNA-binding. Over residues 369 to 381 (TSPNTTNTKVTTR) the composition is skewed to low complexity.

Homotrimer.

The protein resides in the cytoplasm. Functionally, capsid protein (CA) is the structural component of the virus-like particle (VLP), forming the shell that encapsulates the retrotransposons dimeric RNA genome. The particles are assembled from trimer-clustered units and there are holes in the capsid shells that allow for the diffusion of macromolecules. CA also has nucleocapsid-like chaperone activity, promoting primer tRNA(i)-Met annealing to the multipartite primer-binding site (PBS), dimerization of Ty2 RNA and initiation of reverse transcription. The chain is Transposon Ty2-GR1 Gag polyprotein (TY2A-GR1) from Saccharomyces cerevisiae (strain ATCC 204508 / S288c) (Baker's yeast).